The sequence spans 219 residues: Adenylate kinase (219 aa).

10–15 (GAGKGT) contacts ATP. Residues 30–59 (STGDMLRVAVKVGTPLGIEAKKIMDSGGLV) form an NMP region. AMP is bound by residues T31, R36, 57–59 (GLV), 85–88 (GFPR), and Q92. Positions 122–159 (GRRTHLKSGRTYHITYNQPKVEGIDDITGEKLVQRSDD) are LID. ATP is bound by residues R123 and 132–133 (TY). The AMP site is built by R156 and R167. Position 202 (G202) interacts with ATP.

The protein belongs to the adenylate kinase family. Monomer.

It is found in the cytoplasm. The catalysed reaction is AMP + ATP = 2 ADP. The protein operates within purine metabolism; AMP biosynthesis via salvage pathway; AMP from ADP: step 1/1. Functionally, catalyzes the reversible transfer of the terminal phosphate group between ATP and AMP. Plays an important role in cellular energy homeostasis and in adenine nucleotide metabolism. The protein is Adenylate kinase of Vesicomyosocius okutanii subsp. Calyptogena okutanii (strain HA).